The following is a 125-amino-acid chain: Snaclec B6 (125 aa).

3 cysteine pairs are disulfide-bonded: Cys-2-Cys-13, Cys-30-Cys-119, and Cys-96-Cys-111. A C-type lectin domain is found at 9-120 (HEGHCYKVFK…CNISQYFVCQ (112 aa)). Asn-95 carries an N-linked (GlcNAc...) asparagine glycan. Asn-112 carries N-linked (GlcNAc...) asparagine glycosylation.

The protein belongs to the snaclec family. In terms of assembly, heterodimer; disulfide-linked. In terms of tissue distribution, expressed by the venom gland.

The protein localises to the secreted. Functionally, interferes with one step of hemostasis (modulation of platelet aggregation, or coagulation cascade, for example). This Macrovipera lebetinus (Levantine viper) protein is Snaclec B6.